Consider the following 532-residue polypeptide: Probable alpha-galactosidase A (532 aa).

The first 21 residues, 1–21 (MDTTKSLLSTLIAIMIPLSLG), serve as a signal peptide directing secretion. An intrachain disulfide couples C44 to C76. N-linked (GlcNAc...) asparagine glycans are attached at residues N47, N91, and N121. C124 and C154 are oxidised to a cystine. Catalysis depends on D152, which acts as the Nucleophile. The N-linked (GlcNAc...) asparagine glycan is linked to N201. The active-site Proton donor is the D210. Residues 410–531 (CSTVIPTGIV…GLPSGVDIKP (122 aa)) form the Ricin B-type lectin domain. Intrachain disulfides connect C427–C441 and C466–C478.

The protein belongs to the glycosyl hydrolase 27 family.

The protein localises to the secreted. It carries out the reaction Hydrolysis of terminal, non-reducing alpha-D-galactose residues in alpha-D-galactosides, including galactose oligosaccharides, galactomannans and galactolipids.. Hydrolyzes a variety of simple alpha-D-galactoside as well as more complex molecules such as oligosaccharides and polysaccharides. In Aspergillus fumigatus (strain ATCC MYA-4609 / CBS 101355 / FGSC A1100 / Af293) (Neosartorya fumigata), this protein is Probable alpha-galactosidase A (aglA).